Reading from the N-terminus, the 469-residue chain is Ubiquitin carboxyl-terminal hydrolase MINDY-1 (469 aa).

Positions 1 to 85 are disordered; sequence MEHHQPEDPA…APPGPTLGTL (85 aa). Residues 34-53 are compositionally biased toward basic and acidic residues; sequence HPQDTDARDADGEAGEREPA. Residue Ser103 is modified to Phosphoserine. The Nucleophile role is filled by Cys137. The Proton acceptor role is filled by His319. The interval 388-426 is ubiquitin-binding domain (UBD); sequence QVDQDYLIALSLQQQQPRGTLGLTDLELAQQLQQEEYQQ. The segment at 428-469 is disordered; the sequence is QAAQPVWMRTRALSPQGRGATSGRPAGERRQRPKHESDCILL. At Ser441 the chain carries Phosphoserine. Basic and acidic residues predominate over residues 453–469; that stretch reads AGERRQRPKHESDCILL.

It belongs to the MINDY deubiquitinase family. FAM63 subfamily.

It carries out the reaction Thiol-dependent hydrolysis of ester, thioester, amide, peptide and isopeptide bonds formed by the C-terminal Gly of ubiquitin (a 76-residue protein attached to proteins as an intracellular targeting signal).. In terms of biological role, hydrolase that can specifically remove 'Lys-48'-linked conjugated ubiquitin from proteins. Has exodeubiquitinase activity and has a preference for long polyubiquitin chains. May play a regulatory role at the level of protein turnover. This Pongo abelii (Sumatran orangutan) protein is Ubiquitin carboxyl-terminal hydrolase MINDY-1 (MINDY1).